A 601-amino-acid chain; its full sequence is Sodium-dependent phosphate transport protein 2C (601 aa).

At 1–75 (MPNSLAGGQV…RRVVSSFLKA (75 aa)) the chain is on the cytoplasmic side. Ser4 is subject to Phosphoserine. A helical transmembrane segment spans residues 76–96 (CGLLGSLYFFICSLDILSSAF). Topologically, residues 97 to 110 (QLLGSKMAGDIFKD) are extracellular. A helical transmembrane segment spans residues 111–131 (NVVLSNPVAGLVIGVLVTVLV). The Cytoplasmic portion of the chain corresponds to 132-187 (QSSSTSSSIVVSMVASKLLTVQVSVPIIMGVNVGTSITSTLVSMAQSGDRDEFQRA). A helical transmembrane segment spans residues 188-208 (FSGSAVHGIFNWLTVLVLLPL). Topologically, residues 209-324 (ESATAALERL…FAGSKLTDLA (116 aa)) are extracellular. Asn264, Asn267, and Asn299 each carry an N-linked (GlcNAc...) asparagine glycan. A disulfide bond links Cys275 and Cys311. Residues 325-345 (VGFILLAGSLLVLCVCLVLIV) traverse the membrane as a helical segment. Topologically, residues 346–369 (KLLNSVLKGRIAQAVKTVINADFP) are cytoplasmic. A helical membrane pass occupies residues 370-390 (FPFGWLSGYLAILVGAGLTFL). The Extracellular portion of the chain corresponds to 391 to 441 (LQSSSVFTAAIVPLMGVGVIDLERAYPLFLGSNIGTTTTALLAALASPADM). The chain crosses the membrane as a helical span at residues 442 to 462 (LIFAVQVALIHFFFNLAGILL). Topologically, residues 463–487 (WYLVPVLRLPIPLAKRFGNLTAQYR) are cytoplasmic. A helical membrane pass occupies residues 488 to 508 (WVAIVYLLLTFLLLPLAAFGL). Residues 509-512 (SLAG) are Extracellular-facing. Residues 513 to 533 (GTVLAAVGGPLVGLVLLIILV) traverse the membrane as a helical segment. Topologically, residues 534–601 (NVLQQHRPSW…NPQVIASQQL (68 aa)) are cytoplasmic.

It belongs to the SLC34A transporter family. In terms of tissue distribution, expressed only in the kidney.

Its subcellular location is the apical cell membrane. The catalysed reaction is 2 Na(+)(out) + phosphate(out) = 2 Na(+)(in) + phosphate(in). In terms of biological role, involved in actively transporting phosphate into cells via Na(+) cotransport in the renal brush border membrane. The cotransport has a Na(+):Pi stoichiometry of 2:1 and is electroneutral. The sequence is that of Sodium-dependent phosphate transport protein 2C (Slc34a3) from Mus musculus (Mouse).